Reading from the N-terminus, the 294-residue chain is Phosphatidylserine decarboxylase proenzyme (294 aa).

Catalysis depends on charge relay system; for autoendoproteolytic cleavage activity residues aspartate 92, histidine 149, and serine 252. Serine 252 acts as the Schiff-base intermediate with substrate; via pyruvic acid; for decarboxylase activity in catalysis. The residue at position 252 (serine 252) is a Pyruvic acid (Ser); by autocatalysis.

This sequence belongs to the phosphatidylserine decarboxylase family. PSD-B subfamily. Prokaryotic type I sub-subfamily. Heterodimer of a large membrane-associated beta subunit and a small pyruvoyl-containing alpha subunit. Requires pyruvate as cofactor. Is synthesized initially as an inactive proenzyme. Formation of the active enzyme involves a self-maturation process in which the active site pyruvoyl group is generated from an internal serine residue via an autocatalytic post-translational modification. Two non-identical subunits are generated from the proenzyme in this reaction, and the pyruvate is formed at the N-terminus of the alpha chain, which is derived from the carboxyl end of the proenzyme. The autoendoproteolytic cleavage occurs by a canonical serine protease mechanism, in which the side chain hydroxyl group of the serine supplies its oxygen atom to form the C-terminus of the beta chain, while the remainder of the serine residue undergoes an oxidative deamination to produce ammonia and the pyruvoyl prosthetic group on the alpha chain. During this reaction, the Ser that is part of the protease active site of the proenzyme becomes the pyruvoyl prosthetic group, which constitutes an essential element of the active site of the mature decarboxylase.

It localises to the cell membrane. The catalysed reaction is a 1,2-diacyl-sn-glycero-3-phospho-L-serine + H(+) = a 1,2-diacyl-sn-glycero-3-phosphoethanolamine + CO2. It participates in phospholipid metabolism; phosphatidylethanolamine biosynthesis; phosphatidylethanolamine from CDP-diacylglycerol: step 2/2. In terms of biological role, catalyzes the formation of phosphatidylethanolamine (PtdEtn) from phosphatidylserine (PtdSer). This Bordetella avium (strain 197N) protein is Phosphatidylserine decarboxylase proenzyme.